Here is a 680-residue protein sequence, read N- to C-terminus: Methionine--tRNA ligase (680 aa).

The short motif at 15–25 (PYANGPVHIGH) is the 'HIGH' region element. Zn(2+) contacts are provided by Cys147, Cys150, Cys160, and Cys163. A 'KMSKS' region motif is present at residues 332–336 (KISTS). An ATP-binding site is contributed by Thr335. The tRNA-binding domain occupies 579–680 (DFLKLDIRVG…AEVAPGSQVK (102 aa)).

This sequence belongs to the class-I aminoacyl-tRNA synthetase family. MetG type 1 subfamily. As to quaternary structure, homodimer. The cofactor is Zn(2+).

Its subcellular location is the cytoplasm. The catalysed reaction is tRNA(Met) + L-methionine + ATP = L-methionyl-tRNA(Met) + AMP + diphosphate. Its function is as follows. Is required not only for elongation of protein synthesis but also for the initiation of all mRNA translation through initiator tRNA(fMet) aminoacylation. The chain is Methionine--tRNA ligase from Porphyromonas gingivalis (strain ATCC 33277 / DSM 20709 / CIP 103683 / JCM 12257 / NCTC 11834 / 2561).